Reading from the N-terminus, the 142-residue chain is Large ribosomal subunit protein uL13 (142 aa).

This sequence belongs to the universal ribosomal protein uL13 family. In terms of assembly, part of the 50S ribosomal subunit.

This protein is one of the early assembly proteins of the 50S ribosomal subunit, although it is not seen to bind rRNA by itself. It is important during the early stages of 50S assembly. The chain is Large ribosomal subunit protein uL13 from Shigella boydii serotype 18 (strain CDC 3083-94 / BS512).